The sequence spans 512 residues: Serine--tRNA ligase, cytoplasmic (512 aa).

Met1 is subject to N-acetylmethionine. The tract at residues Arg9–Ser61 is interaction with tRNA. Ser241 bears the Phosphoserine mark. L-serine-binding residues include Thr271 and Arg302. Residues Arg302–Glu304 and Val318–Phe321 each bind ATP. Lys323 bears the N6-acetyllysine mark. An L-serine-binding site is contributed by Glu325. Glu391–Ser394 provides a ligand contact to ATP. Residue Asn427 coordinates L-serine. The interval Phe470–Ala512 is disordered. Over residues Glu479–Pro499 the composition is skewed to basic and acidic residues. Positions Lys482 to Lys494 match the Nuclear localization signal motif. A compositionally biased stretch (polar residues) spans Asn502–Ala512. At Ser506 the chain carries Phosphoserine.

It belongs to the class-II aminoacyl-tRNA synthetase family. Type-1 seryl-tRNA synthetase subfamily. In terms of assembly, homodimer. The tRNA molecule may bind across the dimer. Interacts with SIRT2. Interacts with METTL6; interaction is required for the tRNA N(3)-methylcytidine methyltransferase activity of METTL6.

It localises to the cytoplasm. The protein resides in the nucleus. It carries out the reaction tRNA(Ser) + L-serine + ATP = L-seryl-tRNA(Ser) + AMP + diphosphate + H(+). The catalysed reaction is tRNA(Sec) + L-serine + ATP = L-seryl-tRNA(Sec) + AMP + diphosphate + H(+). The protein operates within aminoacyl-tRNA biosynthesis; selenocysteinyl-tRNA(Sec) biosynthesis; L-seryl-tRNA(Sec) from L-serine and tRNA(Sec): step 1/1. Functionally, catalyzes the attachment of serine to tRNA(Ser) in a two-step reaction: serine is first activated by ATP to form Ser-AMP and then transferred to the acceptor end of tRNA(Ser). Is probably also able to aminoacylate tRNA(Sec) with serine, to form the misacylated tRNA L-seryl-tRNA(Sec), which will be further converted into selenocysteinyl-tRNA(Sec). In the nucleus, binds to the VEGFA core promoter and prevents MYC binding and transcriptional activation by MYC. Recruits SIRT2 to the VEGFA promoter, promoting deacetylation of histone H4 at 'Lys-16' (H4K16). Thereby, inhibits the production of VEGFA and sprouting angiogenesis mediated by VEGFA. The sequence is that of Serine--tRNA ligase, cytoplasmic (Sars1) from Mus musculus (Mouse).